Here is a 640-residue protein sequence, read N- to C-terminus: Chaperone protein DnaK (640 aa).

At Thr201 the chain carries Phosphothreonine; by autocatalysis. Residues 603-621 (AASADQGGAPGADAGNAGK) are compositionally biased toward low complexity. The disordered stretch occupies residues 603-625 (AASADQGGAPGADAGNAGKAQDD).

Belongs to the heat shock protein 70 family.

Its function is as follows. Acts as a chaperone. The polypeptide is Chaperone protein DnaK (Stenotrophomonas maltophilia (strain K279a)).